We begin with the raw amino-acid sequence, 36 residues long: Pancreatic polypeptide (36 aa).

Y36 carries the post-translational modification Tyrosine amide.

It belongs to the NPY family.

Its subcellular location is the secreted. Hormone secreted by pancreatic cells that acts as a regulator of pancreatic and gastrointestinal functions probably by signaling through the G protein-coupled receptor NPY4R2. The chain is Pancreatic polypeptide (PPY) from Tapirus pinchaque (Mountain tapir).